Here is a 182-residue protein sequence, read N- to C-terminus: Probable peptidyl-prolyl cis-trans isomerase A (182 aa).

Residues 13–181 (QNATATLHTN…EPVVIDSITI (169 aa)) enclose the PPIase cyclophilin-type domain. Positions 161–182 (TTATDGNDRPTEPVVIDSITIS) are disordered.

Belongs to the cyclophilin-type PPIase family.

The protein resides in the cytoplasm. The catalysed reaction is [protein]-peptidylproline (omega=180) = [protein]-peptidylproline (omega=0). Functionally, PPIases accelerate the folding of proteins. It catalyzes the cis-trans isomerization of proline imidic peptide bonds in oligopeptides. In Mycobacterium leprae (strain TN), this protein is Probable peptidyl-prolyl cis-trans isomerase A (ppiA).